A 537-amino-acid chain; its full sequence is Inositol phosphorylceramide glucuronosyltransferase 1 (537 aa).

Residues 6–26 traverse the membrane as a helical segment; sequence TSLWVLLLALVSIQLNGSFGS. Mn(2+)-binding residues include Asp-124 and Asp-126. Substrate is bound by residues 124–126, 153–155, 180–184, and 248–255; these read DAD, NSG, TGGDQ, and HYTLGPLK. His-248 is a binding site for Mn(2+). Helical transmembrane passes span 293-313, 375-395, 406-426, 468-488, and 494-514; these read DELV…FCIY, VSVV…FAIV, VLVY…FLLF, MAFL…TALF, and MVGL…HLAV.

Belongs to the glycosyltransferase 8 family. Glycogenin subfamily. Mn(2+) serves as cofactor. As to expression, expressed in seedlings, roots, leaves, stems and siliques.

It is found in the golgi apparatus membrane. The enzyme catalyses glucuronate acceptor + UDP-alpha-D-glucuronate = acceptor beta-D-glucuronoside + UDP + H(+). It carries out the reaction a 1D-myo-inositol-1-phospho-N-[(R)-2-hydroxy-very-long-chain fatty acyl]-(R)-4-hydroxysphingoid base + UDP-alpha-D-glucuronate = an alpha-D-glucuronosyl-(1&lt;-&gt;6)-1D-myo-inositol-1-phospho-N-[(R)-2-hydroxy-very-long-chain fatty acyl]-(R)-4-hydroxysphingoid base + UDP + H(+). It participates in sphingolipid metabolism. In terms of biological role, mediates the transfer of glucuronic acid (GlcA) from UDP-GlcA to glycosyl inositol phosphorylceramides (GIPCs). The formation of GIPCs sphingolipids is essential for pollen function, plant growth and defense. Required for global fitness. The sequence is that of Inositol phosphorylceramide glucuronosyltransferase 1 from Arabidopsis thaliana (Mouse-ear cress).